A 37-amino-acid chain; its full sequence is Cytochrome b6-f complex subunit 5 (37 aa).

Residues 5–25 (LLFGIVLGLIPITLAGLFVTA) traverse the membrane as a helical segment.

This sequence belongs to the PetG family. In terms of assembly, the 4 large subunits of the cytochrome b6-f complex are cytochrome b6, subunit IV (17 kDa polypeptide, PetD), cytochrome f and the Rieske protein, while the 4 small subunits are PetG, PetL, PetM and PetN. The complex functions as a dimer.

It localises to the plastid. The protein localises to the chloroplast thylakoid membrane. In terms of biological role, component of the cytochrome b6-f complex, which mediates electron transfer between photosystem II (PSII) and photosystem I (PSI), cyclic electron flow around PSI, and state transitions. PetG is required for either the stability or assembly of the cytochrome b6-f complex. This Lemna minor (Common duckweed) protein is Cytochrome b6-f complex subunit 5.